Consider the following 363-residue polypeptide: Phosphoserine aminotransferase (363 aa).

Arginine 42 contacts L-glutamate. Pyridoxal 5'-phosphate is bound by residues 76–77 (GR), tryptophan 102, threonine 156, aspartate 175, and glutamine 198. The residue at position 199 (lysine 199) is an N6-(pyridoxal phosphate)lysine. Residue 240–241 (NT) participates in pyridoxal 5'-phosphate binding.

This sequence belongs to the class-V pyridoxal-phosphate-dependent aminotransferase family. SerC subfamily. Homodimer. Requires pyridoxal 5'-phosphate as cofactor.

The protein localises to the cytoplasm. The enzyme catalyses O-phospho-L-serine + 2-oxoglutarate = 3-phosphooxypyruvate + L-glutamate. The catalysed reaction is 4-(phosphooxy)-L-threonine + 2-oxoglutarate = (R)-3-hydroxy-2-oxo-4-phosphooxybutanoate + L-glutamate. The protein operates within amino-acid biosynthesis; L-serine biosynthesis; L-serine from 3-phospho-D-glycerate: step 2/3. It participates in cofactor biosynthesis; pyridoxine 5'-phosphate biosynthesis; pyridoxine 5'-phosphate from D-erythrose 4-phosphate: step 3/5. Functionally, catalyzes the reversible conversion of 3-phosphohydroxypyruvate to phosphoserine and of 3-hydroxy-2-oxo-4-phosphonooxybutanoate to phosphohydroxythreonine. The polypeptide is Phosphoserine aminotransferase (Shewanella sp. (strain MR-4)).